The following is a 146-amino-acid chain: MPAKGPLQSVQVFGRKKTATAVAHCKRGNGLIKVNGRPLETIEPATLQYKLLEPVLLLGKERFAGVDIRVRVKGGGHVAQVYAIRQSISKALVAYYQKYVDEASKKEIKDILIQYDRTLLVADPRRCESKKFGGPGARARYQKSYR.

Belongs to the universal ribosomal protein uS9 family. As to quaternary structure, component of the small ribosomal subunit.

The protein localises to the cytoplasm. Its function is as follows. Component of the small ribosomal subunit. The ribosome is a large ribonucleoprotein complex responsible for the synthesis of proteins in the cell. In Ictalurus punctatus (Channel catfish), this protein is Small ribosomal subunit protein uS9 (rps16).